The following is a 160-amino-acid chain: Large ribosomal subunit protein uL30m (160 aa).

Residues 1 to 34 constitute a mitochondrion transit peptide; sequence MAGVLRSAFPRPPCRLQTVKKGAESLIGTEWIRH. The disordered stretch occupies residues 44–64; sequence KVFQPKPEDHEKYGGDPQNPH.

This sequence belongs to the universal ribosomal protein uL30 family. Component of the mitochondrial ribosome large subunit (39S) which comprises a 16S rRNA and about 50 distinct proteins.

The protein localises to the mitochondrion. The sequence is that of Large ribosomal subunit protein uL30m (Mrpl30) from Mus musculus (Mouse).